The following is a 185-amino-acid chain: RRM domain-containing protein ECU09_1470 (185 aa).

RRM domains lie at 8–87 (NQLA…YAKR) and 101–170 (KKVY…PAYE).

The chain is RRM domain-containing protein ECU09_1470 from Encephalitozoon cuniculi (strain GB-M1) (Microsporidian parasite).